The sequence spans 392 residues: Protein NolC (392 aa).

Residues 2–71 form the J domain; it reads KRDLYETLGV…RAAYDRYGHA (70 aa). Disordered regions lie at residues 103–142 and 157–244; these read RRDDGRRSSAPLLGRSRTRCGPSLQHGDHPRGGLFRQDGA and LGRE…TGLR. Over residues 157–170 the composition is skewed to basic and acidic residues; sequence LGREAGHQPEDLRH. A compositionally biased stretch (low complexity) spans 171-185; sequence LPGLRPYPRRPGLLL. Residues 186 to 203 show a composition bias toward basic and acidic residues; it reads DRTHLPDLRRSRSDDHRS. Residues 227-241 are compositionally biased toward basic residues; it reads HRGRHAYPPLRRGRT.

In Rhizobium fredii (Sinorhizobium fredii), this protein is Protein NolC (nolC).